The chain runs to 709 residues: Glycerol kinase (709 aa).

Thr56 is a substrate binding site. Residue Arg60 coordinates ATP. The disordered stretch occupies residues 86–110 (KIGVSGLRRPSTAPARETPNAGDIK). Substrate contacts are provided by Arg201, Tyr258, and Asp386. Residues Thr408, Gly463, and 584–588 (GMSRS) each bind ATP.

The protein belongs to the FGGY kinase family.

It carries out the reaction glycerol + ATP = sn-glycerol 3-phosphate + ADP + H(+). It functions in the pathway polyol metabolism; glycerol degradation via glycerol kinase pathway; sn-glycerol 3-phosphate from glycerol: step 1/1. Key enzyme in the regulation of glycerol uptake and metabolism. Catalyzes the phosphorylation of glycerol to yield sn-glycerol 3-phosphate. The protein is Glycerol kinase (GUT1) of Saccharomyces cerevisiae (strain ATCC 204508 / S288c) (Baker's yeast).